Consider the following 160-residue polypeptide: Large ribosomal subunit protein uL30m (160 aa).

The N-terminal 34 residues, Met1–His34, are a transit peptide targeting the mitochondrion. A disordered region spans residues Val45–His64.

Belongs to the universal ribosomal protein uL30 family. In terms of assembly, component of the mitochondrial ribosome large subunit (39S) which comprises a 16S rRNA and about 50 distinct proteins.

It localises to the mitochondrion. This Rattus norvegicus (Rat) protein is Large ribosomal subunit protein uL30m (Mrpl30).